Here is a 169-residue protein sequence, read N- to C-terminus: S-ribosylhomocysteine lyase (169 aa).

3 residues coordinate Fe cation: H54, H58, and C128.

The protein belongs to the LuxS family. In terms of assembly, homodimer. It depends on Fe cation as a cofactor.

The catalysed reaction is S-(5-deoxy-D-ribos-5-yl)-L-homocysteine = (S)-4,5-dihydroxypentane-2,3-dione + L-homocysteine. Involved in the synthesis of autoinducer 2 (AI-2) which is secreted by bacteria and is used to communicate both the cell density and the metabolic potential of the environment. The regulation of gene expression in response to changes in cell density is called quorum sensing. Catalyzes the transformation of S-ribosylhomocysteine (RHC) to homocysteine (HC) and 4,5-dihydroxy-2,3-pentadione (DPD). This is S-ribosylhomocysteine lyase from Shewanella piezotolerans (strain WP3 / JCM 13877).